A 367-amino-acid chain; its full sequence is 4-hydroxy-3-methylbut-2-en-1-yl diphosphate synthase (flavodoxin) (367 aa).

4 residues coordinate [4Fe-4S] cluster: cysteine 265, cysteine 268, cysteine 300, and glutamate 307.

Belongs to the IspG family. The cofactor is [4Fe-4S] cluster.

It carries out the reaction (2E)-4-hydroxy-3-methylbut-2-enyl diphosphate + oxidized [flavodoxin] + H2O + 2 H(+) = 2-C-methyl-D-erythritol 2,4-cyclic diphosphate + reduced [flavodoxin]. It participates in isoprenoid biosynthesis; isopentenyl diphosphate biosynthesis via DXP pathway; isopentenyl diphosphate from 1-deoxy-D-xylulose 5-phosphate: step 5/6. Functionally, converts 2C-methyl-D-erythritol 2,4-cyclodiphosphate (ME-2,4cPP) into 1-hydroxy-2-methyl-2-(E)-butenyl 4-diphosphate. This chain is 4-hydroxy-3-methylbut-2-en-1-yl diphosphate synthase (flavodoxin), found in Bacillus anthracis.